We begin with the raw amino-acid sequence, 259 residues long: Probable iron export permease protein FetB (259 aa).

At 1-5 (MNSHN) the chain is on the periplasmic side. The chain crosses the membrane as a helical span at residues 6–26 (ITNESLALALMLVVVAILISH). Topologically, residues 27–35 (KEKLALEKD) are cytoplasmic. 2 consecutive transmembrane segments (helical) span residues 36–56 (ILWS…VLKY) and 57–77 (IFSV…CFNA). At 78 to 91 (AWNAQKRSKYIAKA) the chain is on the cytoplasmic side. Residues 92-112 (FISSFIAITVGAGITLAVLIL) form a helical membrane-spanning segment. Residues 113 to 117 (SGSIE) lie on the Periplasmic side of the membrane. A helical transmembrane segment spans residues 118–138 (FIPMQVIPIAGMIAGNAMVAV). At 139 to 191 (GLCYNNLGQRVISEQQQIQEKLSLGATPKQASAILIRDSIRAALIPTVDSAKT) the chain is on the cytoplasmic side. A helical membrane pass occupies residues 192 to 212 (VGLVSLPGMMSGLIFAGIDPV). Residues 213-218 (KAIKYQ) lie on the Periplasmic side of the membrane. Residues 219 to 239 (IMVTFMLLSTASLSTIIACYL) traverse the membrane as a helical segment. Residues 240 to 259 (TYRKFYNSRHQLVVTQLKKK) are Cytoplasmic-facing.

This sequence belongs to the UPF0014 family. As to quaternary structure, the complex is composed of two ATP-binding proteins (FetA) and two transmembrane proteins (FetB).

The protein resides in the cell inner membrane. Part of the ABC transporter complex FetAB, which is probably involved in iron export and enhances resistance to H(2)O(2)-mediated oxidative stress. Probably responsible for the translocation of the substrate across the membrane. The sequence is that of Probable iron export permease protein FetB (fetB) from Escherichia coli (strain K12).